Reading from the N-terminus, the 92-residue chain is Non-specific lipid-transfer protein 1 (92 aa).

4 disulfides stabilise this stretch: C4-C52, C14-C28, C29-C74, and C50-C88.

The protein belongs to the plant LTP family. In terms of tissue distribution, expressed in seeds and, at very low levels, in pulp of fruit (at protein level).

Plant non-specific lipid-transfer proteins transfer phospholipids as well as galactolipids across membranes. May play a role in wax or cutin deposition in the cell walls of expanding epidermal cells and certain secretory tissues. This is Non-specific lipid-transfer protein 1 from Actinidia deliciosa (Kiwi).